The sequence spans 378 residues: Erythronate-4-phosphate dehydrogenase (378 aa).

Residues serine 45 and threonine 66 each contribute to the substrate site. The NAD(+) site is built by aspartate 146 and threonine 175. The active site involves arginine 208. Aspartate 232 contacts NAD(+). The active site involves glutamate 237. Histidine 254 acts as the Proton donor in catalysis. Glycine 257 serves as a coordination point for NAD(+). Position 258 (tyrosine 258) interacts with substrate.

Belongs to the D-isomer specific 2-hydroxyacid dehydrogenase family. PdxB subfamily. In terms of assembly, homodimer.

Its subcellular location is the cytoplasm. It carries out the reaction 4-phospho-D-erythronate + NAD(+) = (R)-3-hydroxy-2-oxo-4-phosphooxybutanoate + NADH + H(+). It participates in cofactor biosynthesis; pyridoxine 5'-phosphate biosynthesis; pyridoxine 5'-phosphate from D-erythrose 4-phosphate: step 2/5. Catalyzes the oxidation of erythronate-4-phosphate to 3-hydroxy-2-oxo-4-phosphonooxybutanoate. This is Erythronate-4-phosphate dehydrogenase from Pectobacterium carotovorum subsp. carotovorum (strain PC1).